The following is a 205-amino-acid chain: Anaerobic dimethyl sulfoxide reductase chain B (205 aa).

3 4Fe-4S ferredoxin-type domains span residues 5 to 33 (YGFFIDSSRCAGCKTCELACKDYKDLTPE), 59 to 89 (FAYYLSISCNHCEDPACTKVCPSGAMHKRED), and 90 to 119 (GFVVVDEDVCIGCRYCHMACPYGAPQYNET). [4Fe-4S] cluster contacts are provided by Cys-14, Cys-17, Cys-20, Cys-24, Cys-67, Cys-70, Cys-75, Cys-79, Cys-99, Cys-102, Cys-105, Cys-109, Cys-126, Cys-129, Cys-141, and Cys-145. A disordered region spans residues 184-205 (KPNANSRPTGDTTGYLANPKEV). Residues 186–195 (NANSRPTGDT) show a composition bias toward polar residues.

In terms of assembly, heterotrimeric enzyme composed of a catalytic heterodimer (DmsAB) and a membrane anchor protein (DmsC). [4Fe-4S] cluster serves as cofactor.

In terms of biological role, electron transfer subunit of the terminal reductase during anaerobic growth on various sulfoxide and N-oxide compounds. The chain is Anaerobic dimethyl sulfoxide reductase chain B (dmsB) from Shigella flexneri.